Reading from the N-terminus, the 498-residue chain is MSAPEGPSKCTWTPNTTENTPHTTRRTPKKLIMDNILDNIGGTPLVRVNKVSSDLECELVAKCEFFNAGGSVKDRIGHRMIVDAEESGRIKKGDTLIEPTSGNTGIGLALTAAIKGYKMIITLPEKMSQEKVDVLKALGAEIIRTPTEAAFDAPESHIGVAKKLNSEIPNSHILDQYGNPSNPLAHYDGTAEELLEQCEGKIDMIVCTAGTGGTITGIARKIKERLPNCIVVGVDPHGSILAQPESLNNTNKSYKIEGIGYDFIPNVLERKLVDQWIKTDDKESFIMARRLIKEEGLLCGGSSGSAMVGALLAAKQLKKGQRCVVLLADSIRNYMTKHLNDDWLVDNGFVDPEYKTKDQQEEEKYHGATVKDLTLPKPITISATTTCAAAVQLLQQYGFDQLPVVSESKKVLGQLTLGNLLSHIASKKAVPTDAVSKVMFRFTKNEKYIPITQSTSLATLSKFFENHSSAIVTENDEIISIVTKIDLLTYLMKSQQKN.

The segment at 1 to 25 (MSAPEGPSKCTWTPNTTENTPHTTR) is disordered. A compositionally biased stretch (low complexity) spans 11-22 (TWTPNTTENTPH). The residue at position 73 (Lys-73) is an N6-(pyridoxal phosphate)lysine. Pyridoxal 5'-phosphate is bound by residues Asn-103, 210–214 (GTGGT), and Ser-302. CBS domains lie at 374–430 (TLPK…KKAV) and 435–497 (VSKV…SQQK).

Belongs to the cysteine synthase/cystathionine beta-synthase family. Requires pyridoxal 5'-phosphate as cofactor.

The enzyme catalyses L-homocysteine + L-serine = L,L-cystathionine + H2O. It participates in amino-acid biosynthesis; L-cysteine biosynthesis; L-cysteine from L-homocysteine and L-serine: step 1/2. This is Cystathionine beta-synthase (cysB) from Dictyostelium discoideum (Social amoeba).